Reading from the N-terminus, the 460-residue chain is Cysteine--tRNA ligase (460 aa).

Cys28 serves as a coordination point for Zn(2+). The 'HIGH' region motif lies at 30-40; that stretch reads MTVYDYCHLGH. Positions 209, 234, and 238 each coordinate Zn(2+). Residues 266 to 270 carry the 'KMSKS' region motif; sequence KMSKS. ATP is bound at residue Lys269.

It belongs to the class-I aminoacyl-tRNA synthetase family. Monomer. The cofactor is Zn(2+).

The protein resides in the cytoplasm. The catalysed reaction is tRNA(Cys) + L-cysteine + ATP = L-cysteinyl-tRNA(Cys) + AMP + diphosphate. This is Cysteine--tRNA ligase from Pseudomonas aeruginosa (strain LESB58).